Consider the following 674-residue polypeptide: DNA ligase (674 aa).

Residues 42 to 46, 91 to 92, and E121 each bind NAD(+); these read DNVYD and SM. The active-site N6-AMP-lysine intermediate is the K123. R144, E178, K294, and K318 together coordinate NAD(+). Zn(2+) contacts are provided by C412, C415, C430, and C435. The BRCT domain occupies 596 to 674; it reads VKDSFVAGKT…ETELLANLKD (79 aa).

The protein belongs to the NAD-dependent DNA ligase family. LigA subfamily. Mg(2+) serves as cofactor. Mn(2+) is required as a cofactor.

It carries out the reaction NAD(+) + (deoxyribonucleotide)n-3'-hydroxyl + 5'-phospho-(deoxyribonucleotide)m = (deoxyribonucleotide)n+m + AMP + beta-nicotinamide D-nucleotide.. In terms of biological role, DNA ligase that catalyzes the formation of phosphodiester linkages between 5'-phosphoryl and 3'-hydroxyl groups in double-stranded DNA using NAD as a coenzyme and as the energy source for the reaction. It is essential for DNA replication and repair of damaged DNA. The sequence is that of DNA ligase from Lacticaseibacillus paracasei (strain ATCC 334 / BCRC 17002 / CCUG 31169 / CIP 107868 / KCTC 3260 / NRRL B-441) (Lactobacillus paracasei).